The following is a 267-amino-acid chain: Thiamine thiazole synthase (267 aa).

NAD(+) contacts are provided by residues Ser41, 60–61 (ER), Gly68, Val132, and 160–162 (HVD). Residues Asp162 and His177 each coordinate Fe cation. Met227 lines the NAD(+) pocket. Arg237 is a binding site for glycine.

The protein belongs to the THI4 family. Homooctamer; tetramer of dimers. It depends on Fe(2+) as a cofactor.

It carries out the reaction hydrogen sulfide + glycine + NAD(+) = ADP-5-ethyl-4-methylthiazole-2-carboxylate + nicotinamide + 3 H2O + H(+). It participates in cofactor biosynthesis; thiamine diphosphate biosynthesis. Functionally, involved in the biosynthesis of the thiazole moiety of thiamine. Catalyzes the conversion of NAD and glycine to adenosine diphosphate 5-(2-hydroxyethyl)-4-methylthiazole-2-carboxylate (ADT), an adenylated thiazole intermediate, using free sulfide as a source of sulfur. The polypeptide is Thiamine thiazole synthase (Saccharolobus solfataricus (strain ATCC 35092 / DSM 1617 / JCM 11322 / P2) (Sulfolobus solfataricus)).